The primary structure comprises 76 residues: ATP synthase subunit c (76 aa).

2 helical membrane passes run 13-33 (LNVV…GILI) and 55-75 (FLGL…AFIF).

Belongs to the ATPase C chain family. In terms of assembly, F-type ATPases have 2 components, F(1) - the catalytic core - and F(0) - the membrane proton channel. F(1) has five subunits: alpha(3), beta(3), gamma(1), delta(1), epsilon(1). F(0) has three main subunits: a(1), b(2) and c(10-14). The alpha and beta chains form an alternating ring which encloses part of the gamma chain. F(1) is attached to F(0) by a central stalk formed by the gamma and epsilon chains, while a peripheral stalk is formed by the delta and b chains.

Its subcellular location is the cell membrane. Its function is as follows. F(1)F(0) ATP synthase produces ATP from ADP in the presence of a proton or sodium gradient. F-type ATPases consist of two structural domains, F(1) containing the extramembraneous catalytic core and F(0) containing the membrane proton channel, linked together by a central stalk and a peripheral stalk. During catalysis, ATP synthesis in the catalytic domain of F(1) is coupled via a rotary mechanism of the central stalk subunits to proton translocation. Functionally, key component of the F(0) channel; it plays a direct role in translocation across the membrane. A homomeric c-ring of between 10-14 subunits forms the central stalk rotor element with the F(1) delta and epsilon subunits. The chain is ATP synthase subunit c from Bifidobacterium animalis subsp. lactis (strain AD011).